Consider the following 417-residue polypeptide: Serine hydroxymethyltransferase (417 aa).

(6S)-5,6,7,8-tetrahydrofolate-binding positions include L112 and 116–118 (GHL). K221 is subject to N6-(pyridoxal phosphate)lysine. Position 247 (E247) interacts with (6S)-5,6,7,8-tetrahydrofolate.

It belongs to the SHMT family. Homodimer. Pyridoxal 5'-phosphate is required as a cofactor.

The protein localises to the cytoplasm. It carries out the reaction (6R)-5,10-methylene-5,6,7,8-tetrahydrofolate + glycine + H2O = (6S)-5,6,7,8-tetrahydrofolate + L-serine. It functions in the pathway one-carbon metabolism; tetrahydrofolate interconversion. The protein operates within amino-acid biosynthesis; glycine biosynthesis; glycine from L-serine: step 1/1. In terms of biological role, catalyzes the reversible interconversion of serine and glycine with tetrahydrofolate (THF) serving as the one-carbon carrier. This reaction serves as the major source of one-carbon groups required for the biosynthesis of purines, thymidylate, methionine, and other important biomolecules. Also exhibits THF-independent aldolase activity toward beta-hydroxyamino acids, producing glycine and aldehydes, via a retro-aldol mechanism. This is Serine hydroxymethyltransferase from Borrelia hermsii (strain HS1 / DAH).